The sequence spans 112 residues: Transcriptional regulator WhiD (112 aa).

Positions 22 to 86 (ACRGVDSSLF…GGLTEDEREE (65 aa)) constitute a 4Fe-4S Wbl-type domain. The [4Fe-4S] cluster site is built by Cys23, Cys53, Cys56, and Cys62.

It belongs to the WhiB family. The 4Fe-4S form is a monomer; upon oxidation forms a disulfide-bonded homodimer. It depends on [4Fe-4S] cluster as a cofactor. Can be nitrosylated by NO, 8 NO react per cluster. These complexes are quite stable under anaerobic conditions, but degrade slowly aerobically. Post-translationally, upon Fe-S cluster removal intramolecular disulfide bonds are formed.

It localises to the cytoplasm. Its function is as follows. Acts as a transcriptional regulator. Probably redox-responsive. The apo- but not holo-form probably binds DNA. Plays a positive role in prespore maturation and the initiation of sporulation septation. The chain is Transcriptional regulator WhiD (whiD) from Streptomyces coelicolor (strain ATCC BAA-471 / A3(2) / M145).